The sequence spans 229 residues: Cytochrome c oxidase subunit 2 (229 aa).

The Mitochondrial intermembrane portion of the chain corresponds to 1-14 (MANHLQFNFQDATS). Residues 15–45 (PLMQELVKFHDHSLTILFFISALILYVLMMT) form a helical membrane-spanning segment. At 46 to 59 (SLSKLTNKNILDSQ) the chain is on the mitochondrial matrix side. Residues 60 to 87 (EIEMVWTVIPAFILIMLALPSIQILYLM) form a helical membrane-spanning segment. Over 88-229 (DEIASPDITI…FESWIIKLSL (142 aa)) the chain is Mitochondrial intermembrane. Residues His-162, Cys-197, Glu-199, Cys-201, His-205, and Met-208 each contribute to the Cu cation site. Glu-199 lines the Mg(2+) pocket.

This sequence belongs to the cytochrome c oxidase subunit 2 family. As to quaternary structure, component of the cytochrome c oxidase (complex IV, CIV), a multisubunit enzyme composed of 14 subunits. The complex is composed of a catalytic core of 3 subunits MT-CO1, MT-CO2 and MT-CO3, encoded in the mitochondrial DNA, and 11 supernumerary subunits COX4I, COX5A, COX5B, COX6A, COX6B, COX6C, COX7A, COX7B, COX7C, COX8 and NDUFA4, which are encoded in the nuclear genome. The complex exists as a monomer or a dimer and forms supercomplexes (SCs) in the inner mitochondrial membrane with NADH-ubiquinone oxidoreductase (complex I, CI) and ubiquinol-cytochrome c oxidoreductase (cytochrome b-c1 complex, complex III, CIII), resulting in different assemblies (supercomplex SCI(1)III(2)IV(1) and megacomplex MCI(2)III(2)IV(2)). Found in a complex with TMEM177, COA6, COX18, COX20, SCO1 and SCO2. Interacts with TMEM177 in a COX20-dependent manner. Interacts with COX20. Interacts with COX16. The cofactor is Cu cation.

The protein resides in the mitochondrion inner membrane. It catalyses the reaction 4 Fe(II)-[cytochrome c] + O2 + 8 H(+)(in) = 4 Fe(III)-[cytochrome c] + 2 H2O + 4 H(+)(out). In terms of biological role, component of the cytochrome c oxidase, the last enzyme in the mitochondrial electron transport chain which drives oxidative phosphorylation. The respiratory chain contains 3 multisubunit complexes succinate dehydrogenase (complex II, CII), ubiquinol-cytochrome c oxidoreductase (cytochrome b-c1 complex, complex III, CIII) and cytochrome c oxidase (complex IV, CIV), that cooperate to transfer electrons derived from NADH and succinate to molecular oxygen, creating an electrochemical gradient over the inner membrane that drives transmembrane transport and the ATP synthase. Cytochrome c oxidase is the component of the respiratory chain that catalyzes the reduction of oxygen to water. Electrons originating from reduced cytochrome c in the intermembrane space (IMS) are transferred via the dinuclear copper A center (CU(A)) of subunit 2 and heme A of subunit 1 to the active site in subunit 1, a binuclear center (BNC) formed by heme A3 and copper B (CU(B)). The BNC reduces molecular oxygen to 2 water molecules using 4 electrons from cytochrome c in the IMS and 4 protons from the mitochondrial matrix. The protein is Cytochrome c oxidase subunit 2 (MT-CO2) of Myxine glutinosa (Atlantic hagfish).